We begin with the raw amino-acid sequence, 250 residues long: 3-deoxy-manno-octulosonate cytidylyltransferase (250 aa).

The protein belongs to the KdsB family.

The protein localises to the cytoplasm. The enzyme catalyses 3-deoxy-alpha-D-manno-oct-2-ulosonate + CTP = CMP-3-deoxy-beta-D-manno-octulosonate + diphosphate. Its pathway is nucleotide-sugar biosynthesis; CMP-3-deoxy-D-manno-octulosonate biosynthesis; CMP-3-deoxy-D-manno-octulosonate from 3-deoxy-D-manno-octulosonate and CTP: step 1/1. It participates in bacterial outer membrane biogenesis; lipopolysaccharide biosynthesis. Activates KDO (a required 8-carbon sugar) for incorporation into bacterial lipopolysaccharide in Gram-negative bacteria. The sequence is that of 3-deoxy-manno-octulosonate cytidylyltransferase from Janthinobacterium sp. (strain Marseille) (Minibacterium massiliensis).